A 317-amino-acid polypeptide reads, in one-letter code: Zinc transporter ZIP3 (317 aa).

At 1–3 (MSQ) the chain is on the extracellular side. The helical transmembrane segment at 4–24 (LLVAKVLCMVGVFFFMLLGSL) threads the bilayer. The Cytoplasmic segment spans residues 25 to 42 (LPVKVIEADFEKAHRSKK). The chain crosses the membrane as a helical span at residues 43 to 63 (VLSLCNTFGGGVFLATCFNAL). Residues 64-85 (LPAVRDKLQQVLSLGHISTDYP) are Extracellular-facing. The helical transmembrane segment at 86–106 (LAETLMMVGFFLTVFVEQLVL) threads the bilayer. The Cytoplasmic portion of the chain corresponds to 107–172 (TFRRERPPFI…RELGRPGPLR (66 aa)). Ser-125 and Ser-129 each carry phosphoserine. A helical membrane pass occupies residues 173 to 193 (LLSLVFALSAHSVFEGLALGL). The Extracellular portion of the chain corresponds to 194 to 199 (QEEGER). Residues 200-220 (VVSLFVGVAVHETLVAVALGI) form a helical membrane-spanning segment. At 221–232 (SMARSAVPLRDA) the chain is on the cytoplasmic side. The chain crosses the membrane as a helical span at residues 233-253 (AKLAVTVSAMIPVGIGLGLGI). Residues 254-265 (ESARSVASSVAS) are Extracellular-facing. A helical membrane pass occupies residues 266-286 (ALLQGLAGGTFLFVTFLEILA). Topologically, residues 287–294 (KELEERSE) are cytoplasmic. A helical transmembrane segment spans residues 295 to 315 (QLLKVLFLVLGYAVLAGMVFL). The Extracellular segment spans residues 316–317 (KW).

The protein belongs to the ZIP transporter (TC 2.A.5) family.

It is found in the cell membrane. The protein resides in the apical cell membrane. The catalysed reaction is Zn(2+)(in) = Zn(2+)(out). Transporter for the divalent cation Zn(2+). Mediates the influx of Zn(2+) into cells from extracellular space. Controls Zn(2+) accumulation into dentate gyrus granule cells in the hippocampus. Mediates Zn(2+) reuptake from the secreted milk within the alveolar lumen. This is Zinc transporter ZIP3 (Slc39a3) from Rattus norvegicus (Rat).